The primary structure comprises 270 residues: Transcription factor PU.1 (270 aa).

The disordered stretch occupies residues 124-162 (LSPAQPSSDEEEGERQSPPLEVSDGEADGLEPGPGLLHG). Phosphoserine is present on residues serine 140 and serine 146. Residues 153–162 (LEPGPGLLHG) are compositionally biased toward low complexity. Residues 170 to 253 (IRLYQFLLDL…VKKKLTYQFS (84 aa)) constitute a DNA-binding region (ETS). DNA contacts are provided by lysine 217, arginine 230, arginine 233, and lysine 243.

The protein belongs to the ETS family. As to quaternary structure, binds DNA as a monomer. Can form homomers. Directly interacts with CEBPD/NF-IL6-beta; this interaction does not affect DNA-binding properties of each partner. Interacts with NONO/p54(nrb). Interacts with RUNX1/AML1. Interacts with GFI1; the interaction represses SPI1 transcriptional activity, hence blocks SPI1-induced macrophage differentiation of myeloid progenitor cells. Interacts with CEBPE. Interacts with IRF4/Pip and IRF8. Interacts with JUN. Interacts with RB1. Interacts with TBP.

The protein localises to the nucleus. Its activity is regulated as follows. Transcriptional activity at macrophage-specific genes is inhibited by interaction with GFI1, which results in the inhibition of SPI1-induced macrophage differentiation of myeloid progenitor cells, but not that of the granulocyte lineage. Its function is as follows. Pioneer transcription factor, which controls hematopoietic cell fate by decompacting stem cell heterochromatin and allowing other transcription factors to enter otherwise inaccessible genomic sites. Once in open chromatin, can directly control gene expression by binding genetic regulatory elements and can also more broadly influence transcription by recruiting transcription factors, such as interferon regulatory factors (IRFs), to otherwise inaccessible genomic regions. Transcriptionally activates genes important for myeloid and lymphoid lineages, such as CSF1R. Transcriptional activation from certain promoters, possibly containing low affinity binding sites, is achieved cooperatively with other transcription factors. FCER1A transactivation is achieved in cooperation with GATA1. May be particularly important for the pro- to pre-B cell transition. Binds (via the ETS domain) onto the purine-rich DNA core sequence 5'-GAGGAA-3', also known as the PU-box. In vitro can bind RNA and interfere with pre-mRNA splicing. The sequence is that of Transcription factor PU.1 (SPI1) from Sus scrofa (Pig).